The chain runs to 574 residues: Fusion glycoprotein F0 (574 aa).

An N-terminal signal peptide occupies residues 1-25 (MATTAMRMIISIIFISTYVTHITLC). The Extracellular segment spans residues 26 to 524 (QNITEEFYQS…SVDVGKSTTN (499 aa)). 2 N-linked (GlcNAc...) asparagine; by host glycosylation sites follow: Asn-27 and Asn-70. Disulfide bonds link Cys-37–Cys-439, Cys-69–Cys-212, Cys-313–Cys-343, Cys-322–Cys-333, Cys-358–Cys-367, Cys-382–Cys-393, and Cys-416–Cys-422. A coiled-coil region spans residues 76–96 (VKLIKQELERYNNAVVELQSL). Asn-120 carries an N-linked (GlcNAc...) asparagine; by host glycan. A fusion peptide region spans residues 137–157 (FLGFLLGIGSAIASGVAVSKV). Residues 158 to 209 (LHLEGEVNKIKNALLSTNKAVVSLSNGVSVLTSKVLDLKNYIDKELLPKVNN) adopt a coiled-coil conformation. Residues 481 to 516 (LVFPSDEFDASIAQVNAKINQSLAFIRRSDELLHSV) are a coiled coil. The N-linked (GlcNAc...) asparagine; by host glycan is linked to Asn-500. The helical transmembrane segment at 525-550 (VVITTIIIVIVVVILMLIAVGLLFYS) threads the bilayer. Over 551–574 (KTRSTPIMLGKDQLSGINNLSFSK) the chain is Cytoplasmic.

This sequence belongs to the paramyxoviruses fusion glycoprotein family. As to quaternary structure, homotrimer. Heterodimer with fusion protein F2; disulfide-linked. Part of a complex composed of F1, F2 and G glycoproteins. As a heterodimer with F2, interacts with host RHOA; this interaction facilitates virus-induced syncytium formation. Homotrimer. Heterodimer with fusion protein F1; disulfide-linked. Part of a complex composed of F1, F2 and G glycoproteins. As a heterodimer with F1, interacts with host RHOA; this interaction facilitates virus-induced syncytium formation. In terms of processing, the F glycoprotein is synthesized as a F0 inactive precursor that is heavily N-glycosylated and processed at two sites by a host furin-like protease probably in the Golgi. The cleavage site between p27 and F1 may occur after endocytosis to yield the mature F1 and F2 proteins. Both cleavages are required for membrane fusion and p27 is released from the processed protein.

It localises to the host Golgi apparatus membrane. The protein localises to the virion membrane. Its subcellular location is the host cell membrane. Its function is as follows. Inactive precursor that is cleaved at two sites by a furin-like protease to give rise to the mature F1 and F2 fusion glycoproteins. In terms of biological role, class I viral fusion protein. Under the current model, the protein has at least 3 conformational states: pre-fusion native state, pre-hairpin intermediate state, and post-fusion hairpin state. During viral and plasma cell membrane fusion, the coiled coil regions assume a trimer-of-hairpins structure, positioning the fusion peptide in close proximity to the C-terminal region of the ectodomain. The formation of this structure appears to drive apposition and subsequent fusion of viral and cellular membranes leading to delivery of the nucleocapsid into the cytoplasm. This fusion is pH independent and occurs at the plasma or endosomal membrane. The trimer of F1-F2 (F protein) also facilitates the attachment and entry into the host cell. Later in infection, F protein expressed at the plasma membrane of infected cells can mediate fusion with adjacent cells to form syncytia, a cytopathic effect that could lead to tissue necrosis. Major determinant of the species specificity of RSV infection. The trimer of F1-F2 (F protein) also facilitates the attachment and entry into the host cell. Later in infection, F protein expressed at the plasma membrane of infected cells can mediate fusion with adjacent cells to form syncytia, a cytopathic effect that could lead to tissue necrosis. This Bos taurus (Bovine) protein is Fusion glycoprotein F0 (F).